The sequence spans 327 residues: D-alanine--D-alanine ligase (327 aa).

Residues 113–312 form the ATP-grasp domain; that stretch reads KRLWMTHDLS…YEDFVMQVVA (200 aa). 139–194 contributes to the ATP binding site; sequence VADLGLPLIVKPAREGSSIGLSKVTDASQMREAFEKAAALDNDVIAETFIDGAELT. Residues Asp-266, Glu-279, and Asn-281 each contribute to the Mg(2+) site.

This sequence belongs to the D-alanine--D-alanine ligase family. Requires Mg(2+) as cofactor. Mn(2+) serves as cofactor.

It localises to the cytoplasm. It carries out the reaction 2 D-alanine + ATP = D-alanyl-D-alanine + ADP + phosphate + H(+). It functions in the pathway cell wall biogenesis; peptidoglycan biosynthesis. Its function is as follows. Cell wall formation. The polypeptide is D-alanine--D-alanine ligase (Cupriavidus pinatubonensis (strain JMP 134 / LMG 1197) (Cupriavidus necator (strain JMP 134))).